The chain runs to 391 residues: Multidrug resistance protein MdtL (391 aa).

12 helical membrane passes run 4–24, 42–62, 69–89, 93–113, 131–151, 158–178, 203–222, 245–265, 269–289, 293–313, 331–351, and 356–376; these read FLICSFALVLLYPAGIDMYLV, IAFSVYLAGMAAAMLFAGKVA, PVAIPGAALFIIASVFCSLAE, LFLAGRFLQGLGAGCCYVVAF, LLNGITCIIPVLAPVLGHLIM, SLFWTMATMGIAVLMLSLFIL, FFLSRVVITTLSVSVILTFV, ALTAGVSMTVSFSTPFALGIF, TLMITSQVLFLAAGITLAVSP, VSLFGITLICAGFSVGFGVAM, LGIAQVCGSSLWIWLAAVVGI, and MLIGILIACSIVSLLLIMFVA.

Belongs to the major facilitator superfamily. DHA1 family. MdtL (TC 2.A.1.2.22) subfamily.

It localises to the cell inner membrane. Functionally, confers resistance to chloramphenicol. The protein is Multidrug resistance protein MdtL of Escherichia coli O127:H6 (strain E2348/69 / EPEC).